Consider the following 79-residue polypeptide: Small ribosomal subunit protein bS18 (79 aa).

It belongs to the bacterial ribosomal protein bS18 family. As to quaternary structure, part of the 30S ribosomal subunit. Forms a tight heterodimer with protein bS6.

Binds as a heterodimer with protein bS6 to the central domain of the 16S rRNA, where it helps stabilize the platform of the 30S subunit. This is Small ribosomal subunit protein bS18 from Bradyrhizobium diazoefficiens (strain JCM 10833 / BCRC 13528 / IAM 13628 / NBRC 14792 / USDA 110).